Here is a 404-residue protein sequence, read N- to C-terminus: Sorting nexin-5 (404 aa).

Residue Ala2 is modified to N-acetylalanine. A PX domain is found at 25–172 (LNVDPSLQID…HVFLEYDQDL (148 aa)). A 1,2-diacyl-sn-glycero-3-phospho-(1D-myo-inositol-4,5-bisphosphate)-binding positions include 40–46 (SERDKVK), 99–105 (FDGPREK), and 113–116 (EGSM). The interaction with DOCK1 stretch occupies residues 169 to 261 (DQDLSVRRKN…HSLALEEPTV (93 aa)). The membrane-binding amphipathic helix stretch occupies residues 183-200 (FGGFFKSVVKSADEVLFS). Phosphoserine is present on Ser193. Residues 202–404 (VKEVDDFFEQ…QSCIDLFKNN (203 aa)) enclose the BAR domain. An N6-acetyllysine modification is found at Lys275.

It belongs to the sorting nexin family. In terms of assembly, forms heterodimers with BAR domain-containing sorting nexins SNX1 and SNX2; does not homodimerize. The heterodimers are proposed to self-assemble into helical arrays on the membrane to stabilize and expand local membrane curvature underlying endosomal tubule formation. Thought to be a component of the originally described retromer complex (also called SNX-BAR retromer) which is a pentamer containing the heterotrimeric retromer cargo-selective complex (CSC), also described as vacuolar protein sorting subcomplex (VPS), and a heterodimeric membrane-deforming subcomplex formed between SNX1 or SNX2 and SNX5 or SNX6 (also called SNX-BAR subcomplex); the respective CSC and SNX-BAR subcomplexes associate with low affinity. Interacts with SNX1, SNX2, VPS26A, VPS29, VPS35, DCTN1, DOCK1, MIB1, PIP5K1C. Interacts with HGS; increased by PIP5K1C kinase activity and by PtdIns(3P) and/or PtdIns(3,4)P2. As to expression, detected in macrophages (at protein level).

It localises to the endosome. The protein resides in the early endosome. Its subcellular location is the early endosome membrane. The protein localises to the cell membrane. It is found in the cytoplasmic vesicle membrane. It localises to the cytoplasm. The protein resides in the cell projection. Its subcellular location is the phagocytic cup. The protein localises to the ruffle. In terms of biological role, involved in several stages of intracellular trafficking. Interacts with membranes containing phosphatidylinositol lipids. Acts in part as component of the retromer membrane-deforming SNX-BAR subcomplex. The SNX-BAR retromer mediates retrograde transport of cargo proteins from endosomes to the trans-Golgi network (TGN) and is involved in endosome-to-plasma membrane transport for cargo protein recycling. The SNX-BAR subcomplex functions to deform the donor membrane into a tubular profile called endosome-to-TGN transport carrier (ETC). Does not have in vitro vesicle-to-membrane remodeling activity. Involved in retrograde transport of lysosomal enzyme receptor IGF2R. May function as link between endosomal transport vesicles and dynactin. Plays a role in the internalization of EGFR after EGF stimulation. Involved in EGFR endosomal sorting and degradation; the function involves PIP5K1C and is retromer-independent. Together with PIP5K1C facilitates HGS interaction with ubiquitinated EGFR, which initiates EGFR sorting to intraluminal vesicles (ILVs) of the multivesicular body for subsequent lysosomal degradation. Involved in E-cadherin sorting and degradation; inhibits PIP5K1C-mediated E-cadherin degradation. Plays a role in macropinocytosis. The protein is Sorting nexin-5 (Snx5) of Mus musculus (Mouse).